A 527-amino-acid chain; its full sequence is Putative zinc finger CCCH domain-containing protein 64 (527 aa).

The disordered stretch occupies residues 103–127 (GQLRSTQTTSKRKAASRKGQREQRV). The segment at 213 to 241 (RPGEPFCRYYMKFGECKHMTFCKYNHPKD) adopts a C3H1-type zinc-finger fold.

This Oryza sativa subsp. japonica (Rice) protein is Putative zinc finger CCCH domain-containing protein 64.